The primary structure comprises 264 residues: Glutamate racemase (264 aa).

Substrate-binding positions include 10 to 11 (DS) and 42 to 43 (YG). The active-site Proton donor/acceptor is the cysteine 73. Position 74–75 (74–75 (NT)) interacts with substrate. Catalysis depends on cysteine 183, which acts as the Proton donor/acceptor. 184 to 185 (TH) contacts substrate.

This sequence belongs to the aspartate/glutamate racemases family.

It carries out the reaction L-glutamate = D-glutamate. It functions in the pathway cell wall biogenesis; peptidoglycan biosynthesis. Its function is as follows. Provides the (R)-glutamate required for cell wall biosynthesis. The sequence is that of Glutamate racemase from Streptococcus pyogenes serotype M6 (strain ATCC BAA-946 / MGAS10394).